The chain runs to 814 residues: Valine--tRNA ligase (814 aa).

Positions 46 to 56 (PTVSGQLHIGH) match the 'HIGH' region motif. The 'KMSKS' region signature appears at 536–540 (KMSKS). K539 contacts ATP.

It belongs to the class-I aminoacyl-tRNA synthetase family. ValS type 2 subfamily. Monomer.

The protein localises to the cytoplasm. The catalysed reaction is tRNA(Val) + L-valine + ATP = L-valyl-tRNA(Val) + AMP + diphosphate. In terms of biological role, catalyzes the attachment of valine to tRNA(Val). As ValRS can inadvertently accommodate and process structurally similar amino acids such as threonine, to avoid such errors, it has a 'posttransfer' editing activity that hydrolyzes mischarged Thr-tRNA(Val) in a tRNA-dependent manner. The polypeptide is Valine--tRNA ligase (Rickettsia typhi (strain ATCC VR-144 / Wilmington)).